A 129-amino-acid chain; its full sequence is M-zodatoxin-Lt8b (129 aa).

Positions 1–20 (MKYFVVALALVAAFACIAES) are cleaved as a signal peptide. The propeptide occupies 21–60 (KPAESEHELAEVEEENELADLEDAVWLEHLADLSDLEEAR). Residues 57–60 (EEAR) carry the Processing quadruplet motif motif.

Cleavage of the propeptide depends on the processing quadruplet motif (XXXR, with at least one of X being E). In terms of tissue distribution, expressed by the venom gland.

It is found in the secreted. Insecticidal, cytolytic and antimicrobial peptide. Forms voltage-dependent, ion-permeable channels in membranes. At high concentration causes cell membrane lysis. This Lachesana tarabaevi (Spider) protein is M-zodatoxin-Lt8b (cit 1-2).